Reading from the N-terminus, the 528-residue chain is DNA damage-binding protein cmr1 (528 aa).

Disordered stretches follow at residues 32 to 98 and 217 to 243; these read AQSS…QYEA and DASQ…DPDP. A compositionally biased stretch (basic residues) spans 52–62; the sequence is KPKKKPPPKKV. A WD 1 repeat occupies 185–226; sequence LTPERIYTMTFHPSEAKPLIFAGDKMGNLGVLDASQEKPTSA. Residues 230–242 show a composition bias toward acidic residues; sequence EDDEEDAEDDDPD. WD repeat units follow at residues 250-290, 297-337, 342-382, 389-428, 451-494, and 497-528; these read PHTR…SVEK, SDDI…RSAV, LSEK…HDDP, VSRL…AAWE, GRWV…LAQL, and DGIT…CLWM.

This sequence belongs to the WD repeat DDB2/WDR76 family.

Its function is as follows. DNA-binding protein that binds to both single- and double-stranded DNA. Binds preferentially to UV-damaged DNA. May be involved in DNA-metabolic processes. This chain is DNA damage-binding protein cmr1, found in Aspergillus fumigatus (strain CBS 144.89 / FGSC A1163 / CEA10) (Neosartorya fumigata).